Here is a 345-residue protein sequence, read N- to C-terminus: MRLTMRWFGPSDKVKLEYIKQIPGMKGIVSAIYDVAVGGVWPKEKILALKNNIERHGLTLDVIESVPVHEDIKLGKPTRDRYIENYKQTLRHLAECGIDTVCYNFMPVFDWTRSQLDFKLEDGSEALIYEEDVISRTNPLSGELELPGWDTSYENESLKGVLQAYKKISEEDLWDHLTYFVQAIMPVADEVGIKMAIHPDDPPWSIFGLPRIVTNKANLERLLSLYDSPNHGITMCSGSLGANEANDLPEMIRHFGGQGRIHFAHARNIKRTGPRSFQESAHLSEAGSVNMVAMLKAYHDIGFTGPLRPDHGRMIWGEKGRPGYGLYDRALGATYLNGIWEAVSS.

Belongs to the mannonate dehydratase family. It depends on Fe(2+) as a cofactor. Mn(2+) is required as a cofactor.

The enzyme catalyses D-mannonate = 2-dehydro-3-deoxy-D-gluconate + H2O. The protein operates within carbohydrate metabolism; pentose and glucuronate interconversion. Its function is as follows. Catalyzes the dehydration of D-mannonate. The sequence is that of Mannonate dehydratase 2 (uxuA2) from Halalkalibacterium halodurans (strain ATCC BAA-125 / DSM 18197 / FERM 7344 / JCM 9153 / C-125) (Bacillus halodurans).